We begin with the raw amino-acid sequence, 179 residues long: Large ribosomal subunit protein uL5 (179 aa).

Belongs to the universal ribosomal protein uL5 family. As to quaternary structure, part of the 50S ribosomal subunit; part of the 5S rRNA/L5/L18/L25 subcomplex. Contacts the 5S rRNA and the P site tRNA. Forms a bridge to the 30S subunit in the 70S ribosome.

Its function is as follows. This is one of the proteins that bind and probably mediate the attachment of the 5S RNA into the large ribosomal subunit, where it forms part of the central protuberance. In the 70S ribosome it contacts protein S13 of the 30S subunit (bridge B1b), connecting the 2 subunits; this bridge is implicated in subunit movement. Contacts the P site tRNA; the 5S rRNA and some of its associated proteins might help stabilize positioning of ribosome-bound tRNAs. The polypeptide is Large ribosomal subunit protein uL5 (Alkaliphilus metalliredigens (strain QYMF)).